The following is a 485-amino-acid chain: Glutamate--tRNA ligase (485 aa).

The short motif at 12 to 22 (PSPTGEPHVGT) is the 'HIGH' region element. The short motif at 253–257 (KLSKR) is the 'KMSKS' region element. K256 lines the ATP pocket.

This sequence belongs to the class-I aminoacyl-tRNA synthetase family. Glutamate--tRNA ligase type 1 subfamily. As to quaternary structure, monomer.

The protein localises to the cytoplasm. It catalyses the reaction tRNA(Glu) + L-glutamate + ATP = L-glutamyl-tRNA(Glu) + AMP + diphosphate. Catalyzes the attachment of glutamate to tRNA(Glu) in a two-step reaction: glutamate is first activated by ATP to form Glu-AMP and then transferred to the acceptor end of tRNA(Glu). The polypeptide is Glutamate--tRNA ligase (Rhizobium meliloti (strain 1021) (Ensifer meliloti)).